Reading from the N-terminus, the 136-residue chain is Holo-[acyl-carrier-protein] synthase (136 aa).

Mg(2+)-binding residues include Asp-8 and Glu-57.

This sequence belongs to the P-Pant transferase superfamily. AcpS family. Requires Mg(2+) as cofactor.

It localises to the cytoplasm. It catalyses the reaction apo-[ACP] + CoA = holo-[ACP] + adenosine 3',5'-bisphosphate + H(+). In terms of biological role, transfers the 4'-phosphopantetheine moiety from coenzyme A to a Ser of acyl-carrier-protein. The sequence is that of Holo-[acyl-carrier-protein] synthase from Methylorubrum extorquens (strain CM4 / NCIMB 13688) (Methylobacterium extorquens).